Here is a 509-residue protein sequence, read N- to C-terminus: Pentatricopeptide repeat-containing protein At2g13420, mitochondrial (509 aa).

The transit peptide at 1–19 (MLLLKQISPPFHLHQLRRR) directs the protein to the mitochondrion. 8 PPR repeats span residues 172–202 (RLVE…RKEE), 206–240 (DEKV…GIEP), 241–285 (NVVT…GIEP), 286–320 (DVTS…GISP), 321–355 (TIET…GISP), 356–390 (SSAT…LCKP), 391–425 (STQT…ETGP), and 426–460 (DLDS…GFLP).

It belongs to the PPR family. P subfamily.

It localises to the mitochondrion. This chain is Pentatricopeptide repeat-containing protein At2g13420, mitochondrial, found in Arabidopsis thaliana (Mouse-ear cress).